The primary structure comprises 871 residues: Ubiquitin carboxyl-terminal hydrolase 8 (871 aa).

Residues threonine 4–glycine 99 enclose the DUSP domain. A USP domain is found at threonine 279–leucine 869. Cysteine 288 functions as the Nucleophile in the catalytic mechanism. Residues glutamate 615–glutamate 650 are disordered. Histidine 828 functions as the Proton acceptor in the catalytic mechanism.

Belongs to the peptidase C19 family.

It carries out the reaction Thiol-dependent hydrolysis of ester, thioester, amide, peptide and isopeptide bonds formed by the C-terminal Gly of ubiquitin (a 76-residue protein attached to proteins as an intracellular targeting signal).. In terms of biological role, recognizes and hydrolyzes the peptide bond at the C-terminal Gly of ubiquitin. Involved in the processing of poly-ubiquitin precursors as well as that of ubiquitinated proteins. The polypeptide is Ubiquitin carboxyl-terminal hydrolase 8 (UBP8) (Arabidopsis thaliana (Mouse-ear cress)).